Here is a 64-residue protein sequence, read N- to C-terminus: Transcription factor P13 (64 aa).

Transcription factor that regulates expression of phage structural components with protein P14. The sequence is that of Transcription factor P13 from Pseudoalteromonas phage PM2 (Bacteriophage PM2).